The primary structure comprises 156 residues: ATP synthase subunit b (156 aa).

The chain crosses the membrane as a helical span at residues 11–31 (LIAFALFVWFCMKFVWPPIIN).

This sequence belongs to the ATPase B chain family. As to quaternary structure, F-type ATPases have 2 components, F(1) - the catalytic core - and F(0) - the membrane proton channel. F(1) has five subunits: alpha(3), beta(3), gamma(1), delta(1), epsilon(1). F(0) has three main subunits: a(1), b(2) and c(10-14). The alpha and beta chains form an alternating ring which encloses part of the gamma chain. F(1) is attached to F(0) by a central stalk formed by the gamma and epsilon chains, while a peripheral stalk is formed by the delta and b chains.

It localises to the cell inner membrane. Its function is as follows. F(1)F(0) ATP synthase produces ATP from ADP in the presence of a proton or sodium gradient. F-type ATPases consist of two structural domains, F(1) containing the extramembraneous catalytic core and F(0) containing the membrane proton channel, linked together by a central stalk and a peripheral stalk. During catalysis, ATP synthesis in the catalytic domain of F(1) is coupled via a rotary mechanism of the central stalk subunits to proton translocation. Component of the F(0) channel, it forms part of the peripheral stalk, linking F(1) to F(0). The sequence is that of ATP synthase subunit b from Haemophilus influenzae (strain 86-028NP).